Consider the following 341-residue polypeptide: 4-hydroxy-2-oxovalerate aldolase (341 aa).

The 253-residue stretch at 5–257 (ITLHDMTLRD…ETGVDVFRIA (253 aa)) folds into the Pyruvate carboxyltransferase domain. A substrate-binding site is contributed by 13–14 (RD). Asp14 contacts Mn(2+). His17 (proton acceptor) is an active-site residue. Ser167 and His196 together coordinate substrate. Mn(2+) contacts are provided by His196 and His198. Tyr287 is a substrate binding site.

This sequence belongs to the 4-hydroxy-2-oxovalerate aldolase family.

The catalysed reaction is (S)-4-hydroxy-2-oxopentanoate = acetaldehyde + pyruvate. This is 4-hydroxy-2-oxovalerate aldolase (mhpE) from Cupriavidus taiwanensis (strain DSM 17343 / BCRC 17206 / CCUG 44338 / CIP 107171 / LMG 19424 / R1) (Ralstonia taiwanensis (strain LMG 19424)).